A 338-amino-acid chain; its full sequence is Large ribosomal subunit protein uL10 (338 aa).

Over residues 298 to 308 (AAQQTQTQQST) the composition is skewed to low complexity. The interval 298-338 (AAQQTQTQQSTAEEKKEEKKEEEKKGPSEEEIGSGLASLFG) is disordered. Positions 309–325 (AEEKKEEKKEEEKKGPS) are enriched in basic and acidic residues.

Belongs to the universal ribosomal protein uL10 family. Part of the 50S ribosomal subunit. Forms part of the ribosomal stalk which helps the ribosome interact with GTP-bound translation factors. Forms a heptameric L10(L12)2(L12)2(L12)2 complex, where L10 forms an elongated spine to which the L12 dimers bind in a sequential fashion.

Functionally, forms part of the ribosomal stalk, playing a central role in the interaction of the ribosome with GTP-bound translation factors. This Saccharolobus islandicus (strain M.16.27) (Sulfolobus islandicus) protein is Large ribosomal subunit protein uL10.